A 253-amino-acid polypeptide reads, in one-letter code: N-acetylmuramoyl-L-alanine amidase CwlM (253 aa).

Residues 4 to 172 (IFIDPGHGGS…IARGHANGLA (169 aa)) enclose the MurNAc-LAA domain. Residues 179-253 (KNAAALYKVQ…AEFDTFIYQE (75 aa)) enclose the SPOR domain. 2 repeat units span residues 184-219 (LYKV…YRDS) and 220-253 (LYKV…IYQE). The interval 184–253 (LYKVQIAAFR…AEFDTFIYQE (70 aa)) is 2 X 35 AA approximate tandem repeats.

The protein belongs to the N-acetylmuramoyl-L-alanine amidase 3 family.

The protein localises to the secreted. The catalysed reaction is Hydrolyzes the link between N-acetylmuramoyl residues and L-amino acid residues in certain cell-wall glycopeptides.. Hydrolyzes the cell wall of M.luteus more efficiently than that of B.licheniformis and B.subtilis. The C-terminal region, including the repeats, determines substrate specificity. This chain is N-acetylmuramoyl-L-alanine amidase CwlM (cwlM), found in Bacillus licheniformis.